The chain runs to 203 residues: Akirin-2 (203 aa).

Serine 18 and serine 21 each carry phosphoserine. The Nuclear localization signal signature appears at 22–27; it reads PKRRRC. Phosphoserine is present on serine 57. The SYVS motif signature appears at 200-203; the sequence is SYVS.

It belongs to the akirin family. Homodimer. Interacts with IPO9; the interaction is direct. Associates (via SYVS motif) with 20S and 26S proteasomes. Interacts with SMARCD1; promoting SWI/SNF complex recruitment. Interacts with NFKBIZ. Interacts with YWHAB. Polyubiquitinated. Polyubiquitination is dependent of UBR5 that extends pre-ubiquitinated AKIRIN2. Widely expressed with the highest expression in peripheral blood leukocytes.

It is found in the nucleus. It localises to the cytoplasm. The protein localises to the membrane. Molecular adapter that acts as a bridge between a variety of multiprotein complexes, and which is involved in embryonic development, immunity, myogenesis and brain development. Plays a key role in nuclear protein degradation by promoting import of proteasomes into the nucleus: directly binds to fully assembled 20S proteasomes at one end and to nuclear import receptor IPO9 at the other end, bridging them together and mediating the import of pre-assembled proteasome complexes through the nuclear pore. Involved in innate immunity by regulating the production of interleukin-6 (IL6) downstream of Toll-like receptor (TLR): acts by bridging the NF-kappa-B inhibitor NFKBIZ and the SWI/SNF complex, leading to promote induction of IL6. Also involved in adaptive immunity by promoting B-cell activation. Involved in brain development: required for the survival and proliferation of cerebral cortical progenitor cells. Involved in myogenesis: required for skeletal muscle formation and skeletal development, possibly by regulating expression of muscle differentiation factors. Also plays a role in facilitating interdigital tissue regression during limb development. The polypeptide is Akirin-2 (Homo sapiens (Human)).